The primary structure comprises 254 residues: Glutathione S-transferase F14 (254 aa).

One can recognise a GST N-terminal domain in the interval 4-85 (SKMKLHCGFI…YLAEQYKDVG (82 aa)). Glutathione is bound by residues 42 to 43 (AK), 56 to 57 (EV), and 69 to 70 (EP). One can recognise a GST C-terminal domain in the interval 92-231 (DPKKRAIMSM…DLMKQRRLPI (140 aa)).

This sequence belongs to the GST superfamily. Phi family.

The protein resides in the cytoplasm. It localises to the cytosol. It catalyses the reaction RX + glutathione = an S-substituted glutathione + a halide anion + H(+). Functionally, may be involved in the conjugation of reduced glutathione to a wide number of exogenous and endogenous hydrophobic electrophiles and have a detoxification role against certain herbicides. This chain is Glutathione S-transferase F14, found in Arabidopsis thaliana (Mouse-ear cress).